The following is a 444-amino-acid chain: 23S rRNA (uracil(1939)-C(5))-methyltransferase RlmD (444 aa).

A TRAM domain is found at 5–67 (RNRFDRTPFQ…RHFDEAKTVE (63 aa)). Positions 80, 86, 89, and 168 each coordinate [4Fe-4S] cluster. Residues glutamine 276, phenylalanine 305, asparagine 310, glutamate 326, aspartate 353, and aspartate 374 each coordinate S-adenosyl-L-methionine. Cysteine 400 serves as the catalytic Nucleophile.

This sequence belongs to the class I-like SAM-binding methyltransferase superfamily. RNA M5U methyltransferase family. RlmD subfamily.

The enzyme catalyses uridine(1939) in 23S rRNA + S-adenosyl-L-methionine = 5-methyluridine(1939) in 23S rRNA + S-adenosyl-L-homocysteine + H(+). In terms of biological role, catalyzes the formation of 5-methyl-uridine at position 1939 (m5U1939) in 23S rRNA. This Xanthomonas oryzae pv. oryzae (strain KACC10331 / KXO85) protein is 23S rRNA (uracil(1939)-C(5))-methyltransferase RlmD.